The primary structure comprises 180 residues: Large ribosomal subunit protein uL5 (180 aa).

Belongs to the universal ribosomal protein uL5 family. As to quaternary structure, part of the 50S ribosomal subunit; part of the 5S rRNA/L5/L18/L25 subcomplex. Contacts the 5S rRNA and the P site tRNA. Forms a bridge to the 30S subunit in the 70S ribosome.

Its function is as follows. This is one of the proteins that bind and probably mediate the attachment of the 5S RNA into the large ribosomal subunit, where it forms part of the central protuberance. In the 70S ribosome it contacts protein S13 of the 30S subunit (bridge B1b), connecting the 2 subunits; this bridge is implicated in subunit movement. Contacts the P site tRNA; the 5S rRNA and some of its associated proteins might help stabilize positioning of ribosome-bound tRNAs. In Limosilactobacillus fermentum (strain NBRC 3956 / LMG 18251) (Lactobacillus fermentum), this protein is Large ribosomal subunit protein uL5.